Consider the following 361-residue polypeptide: Adenosine kinase (361 aa).

Positions 7–15 (PKPKKLKVE) match the Nuclear localization signal motif. Asp-34 is an adenosine binding site. Ser-48 contacts Mg(2+). Tyr-76 is subject to Phosphotyrosine. A Mg(2+)-binding site is contributed by Asn-147. Gln-305 lines the adenosine pocket. Residue Asp-316 is part of the active site. Asp-316 acts as the Proton acceptor in catalysis.

It belongs to the carbohydrate kinase PfkB family. In terms of assembly, monomer. Requires Mg(2+) as cofactor. As to expression, widely expressed. Highly expressed in liver, testis, kidney and spleen (at protein level). In brain, expression in most forebrain structures and the cerebellum is higher than in the midbrain and brainstem (at protein level). In terms of tissue distribution, major isoform in testis and kidney. Not detected in most brain regions, except in the cerebellum, where it is expressed at a similar level to that of isoform 2 (at protein level). Major isoform in spleen and in most brain regions, except in the cerebellum, where it is expressed at a similar level to that of isoform 1 (at protein level).

Its subcellular location is the nucleus. It localises to the cytoplasm. It carries out the reaction adenosine + ATP = AMP + ADP + H(+). Its pathway is purine metabolism; AMP biosynthesis via salvage pathway; AMP from adenosine: step 1/1. Activity is inhibited by 5-iodotubercidin and 5'-amino-5'-deoxyadenosine. Its function is as follows. Catalyzes the phosphorylation of the purine nucleoside adenosine at the 5' position in an ATP-dependent manner. Serves as a potential regulator of concentrations of extracellular adenosine and intracellular adenine nucleotides. The polypeptide is Adenosine kinase (Adk) (Mus musculus (Mouse)).